Consider the following 214-residue polypeptide: MVIDKSIPKATAKRLSLYYRIFKRFHADQVEKASSKQIADAMGIDSATVRRDFSYFGELGRRGFGYDVTKLMNFFADLLNDHSTTNVILVGCGNIGRALLHYRFHDRNKMQIAMGFDTDDNALVGTKTADNIPVHGISSVKERIANTDIETAILTVPSIHAQEVTDQLIEVGIKGILSFAPVHLQVPKGVIVQSVDLTSELQTLLYFMNQNHLD.

The H-T-H motif DNA-binding region spans 17-56 (LYYRIFKRFHADQVEKASSKQIADAMGIDSATVRRDFSYF). 91-96 (GCGNIG) lines the NAD(+) pocket.

This sequence belongs to the transcriptional regulatory Rex family. As to quaternary structure, homodimer.

It is found in the cytoplasm. Functionally, modulates transcription in response to changes in cellular NADH/NAD(+) redox state. The polypeptide is Redox-sensing transcriptional repressor Rex (Streptococcus pyogenes serotype M12 (strain MGAS9429)).